A 161-amino-acid polypeptide reads, in one-letter code: Vitamin K epoxide reductase complex subunit 1 (161 aa).

Residues 1–9 lie on the Cytoplasmic side of the membrane; the sequence is MGTTWRSPG. Residues 10–29 form a helical membrane-spanning segment; it reads LVRLALCLAGLALSLYALHV. The Lumenal portion of the chain corresponds to 30–80; the sequence is KAARARDENYRALCDVGTAISCSRVFSSRWGRGFGLVEHMLGADSVLNQSN. The cysteines at positions 43 and 51 are disulfide-linked. Asn80 lines the (S)-warfarin pocket. A helical transmembrane segment spans residues 81–95; that stretch reads SIFGCLFYTLQLLLG. Residues 96 to 100 lie on the Cytoplasmic side of the membrane; it reads CLRGR. A helical transmembrane segment spans residues 101–128; the sequence is WASILLVLSSLVSVAGSVYLAWILFFVL. At 129-131 the chain is on the lumenal side; it reads YDF. Cys132 and Cys135 are joined by a disulfide. The helical transmembrane segment at 132–153 threads the bilayer; sequence CIVCITTYAINVGLMLLSFQKV. Residues Cys135 and Tyr139 each coordinate phylloquinone. Residue Tyr139 participates in (S)-warfarin binding. The Cytoplasmic portion of the chain corresponds to 154–161; that stretch reads PEHKTKKH.

It belongs to the VKOR family. As to expression, detected in liver.

It is found in the endoplasmic reticulum membrane. It carries out the reaction phylloquinone + [protein]-disulfide + H2O = 2,3-epoxyphylloquinone + [protein]-dithiol. The catalysed reaction is phylloquinol + [protein]-disulfide = phylloquinone + [protein]-dithiol. Inhibited by warfarin (coumadin). Warfarin locks VKORC1 in both redox states into the closed conformation. Its function is as follows. Involved in vitamin K metabolism. Catalytic subunit of the vitamin K epoxide reductase (VKOR) complex which reduces inactive vitamin K 2,3-epoxide to active vitamin K. Vitamin K is required for the gamma-carboxylation of various proteins, including clotting factors, and is required for normal blood coagulation, but also for normal bone development. The polypeptide is Vitamin K epoxide reductase complex subunit 1 (Vkorc1) (Mus musculus (Mouse)).